The chain runs to 274 residues: Energy-coupling factor transporter ATP-binding protein EcfA1 (274 aa).

In terms of domain architecture, ABC transporter spans 9–240 (CSFINVAFSY…EQELQKIRLD (232 aa)). 41 to 48 (GHNGSGKS) is a binding site for ATP.

It belongs to the ABC transporter superfamily. Energy-coupling factor EcfA family. As to quaternary structure, forms a stable energy-coupling factor (ECF) transporter complex composed of 2 membrane-embedded substrate-binding proteins (S component), 2 ATP-binding proteins (A component) and 2 transmembrane proteins (T component).

The protein localises to the cell membrane. In terms of biological role, ATP-binding (A) component of a common energy-coupling factor (ECF) ABC-transporter complex. Unlike classic ABC transporters this ECF transporter provides the energy necessary to transport a number of different substrates. The sequence is that of Energy-coupling factor transporter ATP-binding protein EcfA1 from Mycoplasma genitalium (strain ATCC 33530 / DSM 19775 / NCTC 10195 / G37) (Mycoplasmoides genitalium).